Here is a 141-residue protein sequence, read N- to C-terminus: Hemoglobin subunit alpha-D (141 aa).

Residues 1 to 141 (MLSADDKKII…VAAVLAEKYR (141 aa)) form the Globin domain. Residues histidine 58 and histidine 87 each contribute to the heme b site.

The protein belongs to the globin family. In terms of assembly, heterotetramer of two alpha-D chains and two beta chains. In terms of tissue distribution, red blood cells.

Involved in oxygen transport from the lung to the various peripheral tissues. The sequence is that of Hemoglobin subunit alpha-D (HBAD) from Anser indicus (Bar-headed goose).